Consider the following 279-residue polypeptide: Probable endonuclease 4 (279 aa).

Histidine 66, histidine 106, glutamate 142, aspartate 175, histidine 178, histidine 212, aspartate 225, histidine 227, and glutamate 257 together coordinate Zn(2+).

This sequence belongs to the AP endonuclease 2 family. Requires Zn(2+) as cofactor.

It carries out the reaction Endonucleolytic cleavage to 5'-phosphooligonucleotide end-products.. Functionally, endonuclease IV plays a role in DNA repair. It cleaves phosphodiester bonds at apurinic or apyrimidinic (AP) sites, generating a 3'-hydroxyl group and a 5'-terminal sugar phosphate. This Moorella thermoacetica (strain ATCC 39073 / JCM 9320) protein is Probable endonuclease 4.